The chain runs to 401 residues: uncharacterized protein (401 aa).

K242 bears the N6-(pyridoxal phosphate)lysine mark.

The protein belongs to the class-I pyridoxal-phosphate-dependent aminotransferase family. As to quaternary structure, homodimer. It depends on pyridoxal 5'-phosphate as a cofactor.

Its subcellular location is the cytoplasm. This is an uncharacterized protein from Saccharolobus solfataricus (strain ATCC 35092 / DSM 1617 / JCM 11322 / P2) (Sulfolobus solfataricus).